The following is a 187-amino-acid chain: Ribosome-recycling factor (187 aa).

This sequence belongs to the RRF family.

It is found in the cytoplasm. Functionally, responsible for the release of ribosomes from messenger RNA at the termination of protein biosynthesis. May increase the efficiency of translation by recycling ribosomes from one round of translation to another. The chain is Ribosome-recycling factor from Methylobacterium nodulans (strain LMG 21967 / CNCM I-2342 / ORS 2060).